Here is a 100-residue protein sequence, read N- to C-terminus: NADH-quinone oxidoreductase subunit K 1 (100 aa).

3 consecutive transmembrane segments (helical) span residues 4-24 (LHSY…GVLV), 29-49 (IVIF…FIAL), and 60-80 (IFVF…LALM).

It belongs to the complex I subunit 4L family. In terms of assembly, NDH-1 is composed of 14 different subunits. Subunits NuoA, H, J, K, L, M, N constitute the membrane sector of the complex.

The protein localises to the cell inner membrane. The catalysed reaction is a quinone + NADH + 5 H(+)(in) = a quinol + NAD(+) + 4 H(+)(out). Functionally, NDH-1 shuttles electrons from NADH, via FMN and iron-sulfur (Fe-S) centers, to quinones in the respiratory chain. The immediate electron acceptor for the enzyme in this species is believed to be ubiquinone. Couples the redox reaction to proton translocation (for every two electrons transferred, four hydrogen ions are translocated across the cytoplasmic membrane), and thus conserves the redox energy in a proton gradient. This is NADH-quinone oxidoreductase subunit K 1 from Geobacter sulfurreducens (strain ATCC 51573 / DSM 12127 / PCA).